The following is a 366-amino-acid chain: Phospho-N-acetylmuramoyl-pentapeptide-transferase (366 aa).

10 helical membrane passes run 3–23 (QIII…PILI), 55–75 (IAII…SYFA), 80–100 (FTAS…TGFA), 118–138 (AKLI…LRFP), 161–181 (IAFG…YVVV), 197–217 (LAAG…FWQF), 238–258 (IAVL…WNAA), 262–282 (IFMG…ISVV), 290–310 (VIIG…IAVF), and 341–361 (FWLI…GDWL).

The protein belongs to the glycosyltransferase 4 family. MraY subfamily. It depends on Mg(2+) as a cofactor.

The protein resides in the cell membrane. It carries out the reaction UDP-N-acetyl-alpha-D-muramoyl-L-alanyl-gamma-D-glutamyl-meso-2,6-diaminopimeloyl-D-alanyl-D-alanine + di-trans,octa-cis-undecaprenyl phosphate = di-trans,octa-cis-undecaprenyl diphospho-N-acetyl-alpha-D-muramoyl-L-alanyl-D-glutamyl-meso-2,6-diaminopimeloyl-D-alanyl-D-alanine + UMP. It functions in the pathway cell wall biogenesis; peptidoglycan biosynthesis. Its function is as follows. Catalyzes the initial step of the lipid cycle reactions in the biosynthesis of the cell wall peptidoglycan: transfers peptidoglycan precursor phospho-MurNAc-pentapeptide from UDP-MurNAc-pentapeptide onto the lipid carrier undecaprenyl phosphate, yielding undecaprenyl-pyrophosphoryl-MurNAc-pentapeptide, known as lipid I. This is Phospho-N-acetylmuramoyl-pentapeptide-transferase from Corynebacterium efficiens (strain DSM 44549 / YS-314 / AJ 12310 / JCM 11189 / NBRC 100395).